Here is a 324-residue protein sequence, read N- to C-terminus: Glyoxylate/hydroxypyruvate reductase B (324 aa).

Residues Arg237 and Glu266 contribute to the active site. His285 acts as the Proton donor in catalysis.

The protein belongs to the D-isomer specific 2-hydroxyacid dehydrogenase family. GhrB subfamily. In terms of assembly, homodimer.

It is found in the cytoplasm. The catalysed reaction is glycolate + NADP(+) = glyoxylate + NADPH + H(+). It carries out the reaction (R)-glycerate + NAD(+) = 3-hydroxypyruvate + NADH + H(+). It catalyses the reaction (R)-glycerate + NADP(+) = 3-hydroxypyruvate + NADPH + H(+). Functionally, catalyzes the NADPH-dependent reduction of glyoxylate and hydroxypyruvate into glycolate and glycerate, respectively. This is Glyoxylate/hydroxypyruvate reductase B from Shigella boydii serotype 4 (strain Sb227).